A 196-amino-acid chain; its full sequence is HTH-type transcriptional regulator EcpR (196 aa).

Residues 138 to 196 enclose the HTH luxR-type domain; it reads KDIKKDKITDREMEIIRMTAQGMLPKSIARIENCSVKTVYTHRRNAEAKLYSKIYKLVP. Residues 162 to 181 constitute a DNA-binding region (H-T-H motif); the sequence is PKSIARIENCSVKTVYTHRR.

Belongs to the EcpR/MatA family.

It is found in the cytoplasm. In terms of biological role, part of the ecpRABCDE operon, which encodes the E.coli common pilus (ECP). ECP is found in both commensal and pathogenic strains and plays a dual role in early-stage biofilm development and host cell recognition. Positively regulates the expression of the ecp operon. The chain is HTH-type transcriptional regulator EcpR (ecpR) from Escherichia coli O17:K52:H18 (strain UMN026 / ExPEC).